Consider the following 1068-residue polypeptide: tRNA wybutosine-synthesizing protein 4 (1068 aa).

Residues 1-31 (MCPPEQPAKAMAPSKSNQAAKSAVPTKEEKS) form a disordered region. S-adenosyl-L-methionine is bound by residues arginine 81, glycine 107, aspartate 134, 181 to 182 (DL), and glutamate 208. Positions 876–1024 (ADFPSLSSDF…ALGRDVYGNR (149 aa)) constitute a JmjC domain.

It belongs to the methyltransferase superfamily. LCMT family.

It carries out the reaction 7-[(3S)-3-amino-3-carboxypropyl]wyosine(37) in tRNA(Phe) + S-adenosyl-L-methionine = 7-[(3S)-(3-amino-3-methoxycarbonyl)propyl]wyosine(37) in tRNA(Phe) + S-adenosyl-L-homocysteine. It catalyses the reaction 7-[(3S)-(3-amino-3-methoxycarbonyl)propyl]wyosine(37) in tRNA(Phe) + S-adenosyl-L-methionine + CO2 = wybutosine(37) in tRNA(Phe) + S-adenosyl-L-homocysteine + 2 H(+). The protein operates within tRNA modification; wybutosine-tRNA(Phe) biosynthesis. Its function is as follows. Probable S-adenosyl-L-methionine-dependent methyltransferase that acts as a component of the wybutosine biosynthesis pathway. Wybutosine is a hyper modified guanosine with a tricyclic base found at the 3'-position adjacent to the anticodon of eukaryotic phenylalanine tRNA. May methylate the carboxyl group of leucine residues to form alpha-leucine ester residues. The chain is tRNA wybutosine-synthesizing protein 4 (ppm2) from Emericella nidulans (strain FGSC A4 / ATCC 38163 / CBS 112.46 / NRRL 194 / M139) (Aspergillus nidulans).